Consider the following 200-residue polypeptide: Cytochrome c biogenesis ATP-binding export protein CcmA (200 aa).

The 197-residue stretch at 3 to 199 folds into the ABC transporter domain; the sequence is LSGRRVICVR…DSRELRIGGV (197 aa). 35–42 contacts ATP; it reads GRNGSGKT.

This sequence belongs to the ABC transporter superfamily. CcmA exporter (TC 3.A.1.107) family. As to quaternary structure, the complex is composed of two ATP-binding proteins (CcmA) and two transmembrane proteins (CcmB).

The protein resides in the cell inner membrane. The enzyme catalyses heme b(in) + ATP + H2O = heme b(out) + ADP + phosphate + H(+). In terms of biological role, part of the ABC transporter complex CcmAB involved in the biogenesis of c-type cytochromes; once thought to export heme, this seems not to be the case, but its exact role is uncertain. Responsible for energy coupling to the transport system. The protein is Cytochrome c biogenesis ATP-binding export protein CcmA of Bradyrhizobium diazoefficiens (strain JCM 10833 / BCRC 13528 / IAM 13628 / NBRC 14792 / USDA 110).